Here is a 186-residue protein sequence, read N- to C-terminus: Elongation factor P (186 aa).

This sequence belongs to the elongation factor P family.

The protein resides in the cytoplasm. It functions in the pathway protein biosynthesis; polypeptide chain elongation. Functionally, involved in peptide bond synthesis. Stimulates efficient translation and peptide-bond synthesis on native or reconstituted 70S ribosomes in vitro. Probably functions indirectly by altering the affinity of the ribosome for aminoacyl-tRNA, thus increasing their reactivity as acceptors for peptidyl transferase. In Coprothermobacter proteolyticus (strain ATCC 35245 / DSM 5265 / OCM 4 / BT), this protein is Elongation factor P.